Here is a 908-residue protein sequence, read N- to C-terminus: Protein O-mannosyltransferase 1 (908 aa).

2 disordered regions span residues 1–85 (MYNN…SAIN) and 115–160 (GSVE…SGSR). The segment covering 21-31 (QRRKTTTRSRS) has biased composition (basic residues). Composition is skewed to polar residues over residues 39-54 (CTSE…NGAQ) and 132-149 (LTAT…SPTI). Residues 190–210 (FTVNLSIDLFSWTLFLLAFCT) form a helical membrane-spanning segment. N265 carries N-linked (GlcNAc...) asparagine glycosylation. The next 5 helical transmembrane spans lie at 279–299 (VPIF…APAV), 311–328 (WAAA…SLLT), 331–351 (RFVL…ACLL), 370–390 (AGVL…ALAL), and 418–438 (LSRL…VFYV). 3 MIR domains span residues 473-534 (PLAV…VKRP), 545-602 (PDVI…VEIL), and 608-664 (GDSW…VEEH). Helical transmembrane passes span 749–769 (VLIW…LAFY), 788–808 (FLMA…PYYF), 813–833 (LFLH…CFVV), and 857–877 (LALL…LPLS).

The protein belongs to the glycosyltransferase 39 family. As to quaternary structure, interacts with tw/POMT2.

The protein localises to the endoplasmic reticulum membrane. It catalyses the reaction a di-trans,poly-cis-dolichyl beta-D-mannosyl phosphate + L-seryl-[protein] = 3-O-(alpha-D-mannosyl)-L-seryl-[protein] + a di-trans,poly-cis-dolichyl phosphate + H(+). The catalysed reaction is a di-trans,poly-cis-dolichyl beta-D-mannosyl phosphate + L-threonyl-[protein] = 3-O-(alpha-D-mannosyl)-L-threonyl-[protein] + a di-trans,poly-cis-dolichyl phosphate + H(+). It participates in protein modification; protein glycosylation. Rt/POMT1 and tw/POMT2 function as a protein O-mannosyltransferase in association with each other to generate and maintain normal muscle development. This is Protein O-mannosyltransferase 1 from Drosophila pseudoobscura pseudoobscura (Fruit fly).